A 901-amino-acid chain; its full sequence is Protein translocase subunit SecA (901 aa).

Residues Gln-87, 105-109 (GEGKT), and Asp-512 contribute to the ATP site. A disordered region spans residues 859-901 (HQDDDSAAAAALAAQTGERKVGRNDPCPCGSGKKYKQCHGRLQ). Cys-885, Cys-887, Cys-896, and His-897 together coordinate Zn(2+). Basic residues predominate over residues 891-901 (KKYKQCHGRLQ).

This sequence belongs to the SecA family. Monomer and homodimer. Part of the essential Sec protein translocation apparatus which comprises SecA, SecYEG and auxiliary proteins SecDF-YajC and YidC. The cofactor is Zn(2+).

Its subcellular location is the cell inner membrane. The protein resides in the cytoplasm. It carries out the reaction ATP + H2O + cellular proteinSide 1 = ADP + phosphate + cellular proteinSide 2.. In terms of biological role, part of the Sec protein translocase complex. Interacts with the SecYEG preprotein conducting channel. Has a central role in coupling the hydrolysis of ATP to the transfer of proteins into and across the cell membrane, serving both as a receptor for the preprotein-SecB complex and as an ATP-driven molecular motor driving the stepwise translocation of polypeptide chains across the membrane. The polypeptide is Protein translocase subunit SecA (Escherichia coli O9:H4 (strain HS)).